Consider the following 278-residue polypeptide: MTNQAPIPVIVNGAAGKMGREVIKAVAQAPDLNLVGAIDHSLEHQDKDAGELAGLSEPLEVPITNQLEPMLGYVAGDRQSPPGVIVDFTHPDSVYDNIRSAIAYGIRPVVGTTGLSPEQIQDLADFADKASTGCLIIPNFSIGMVLLQQAAIAASKYFDHVEIIELHHNQKADAPSGTAIQTAQLLGELGKTFNPALVEETEKLPGARGSIADEGIRIHSVRLPGLIAHQEVIFGAAGQIYTLRHDTSDRACYMPGVLLAIRKVLALKSLVYGLEKIL.

NAD(+) contacts are provided by residues 13-18 (GAAGKM) and 111-113 (GTT). His-167 serves as the catalytic Proton donor/acceptor. His-168 contacts (S)-2,3,4,5-tetrahydrodipicolinate. The active-site Proton donor is the Lys-171. 177 to 178 (GT) contacts (S)-2,3,4,5-tetrahydrodipicolinate.

It belongs to the DapB family.

The protein localises to the cytoplasm. It carries out the reaction (S)-2,3,4,5-tetrahydrodipicolinate + NAD(+) + H2O = (2S,4S)-4-hydroxy-2,3,4,5-tetrahydrodipicolinate + NADH + H(+). It catalyses the reaction (S)-2,3,4,5-tetrahydrodipicolinate + NADP(+) + H2O = (2S,4S)-4-hydroxy-2,3,4,5-tetrahydrodipicolinate + NADPH + H(+). It functions in the pathway amino-acid biosynthesis; L-lysine biosynthesis via DAP pathway; (S)-tetrahydrodipicolinate from L-aspartate: step 4/4. In terms of biological role, catalyzes the conversion of 4-hydroxy-tetrahydrodipicolinate (HTPA) to tetrahydrodipicolinate. This chain is 4-hydroxy-tetrahydrodipicolinate reductase, found in Nostoc punctiforme (strain ATCC 29133 / PCC 73102).